The primary structure comprises 303 residues: Probable 5-dehydro-4-deoxyglucarate dehydratase (303 aa).

Belongs to the DapA family.

The catalysed reaction is 5-dehydro-4-deoxy-D-glucarate + H(+) = 2,5-dioxopentanoate + CO2 + H2O. The protein operates within carbohydrate acid metabolism; D-glucarate degradation; 2,5-dioxopentanoate from D-glucarate: step 2/2. The protein is Probable 5-dehydro-4-deoxyglucarate dehydratase of Pseudomonas putida (strain ATCC 700007 / DSM 6899 / JCM 31910 / BCRC 17059 / LMG 24140 / F1).